The primary structure comprises 402 residues: Beta sliding clamp (402 aa).

The protein belongs to the beta sliding clamp family. Forms a ring-shaped head-to-tail homodimer around DNA which binds and tethers DNA polymerases and other proteins to the DNA. The DNA replisome complex has a single clamp-loading complex (3 tau and 1 each of delta, delta', psi and chi subunits) which binds 3 Pol III cores (1 core on the leading strand and 2 on the lagging strand) each with a beta sliding clamp dimer. Additional proteins in the replisome are other copies of gamma, psi and chi, Ssb, DNA helicase and RNA primase.

It localises to the cytoplasm. Its function is as follows. Confers DNA tethering and processivity to DNA polymerases and other proteins. Acts as a clamp, forming a ring around DNA (a reaction catalyzed by the clamp-loading complex) which diffuses in an ATP-independent manner freely and bidirectionally along dsDNA. Initially characterized for its ability to contact the catalytic subunit of DNA polymerase III (Pol III), a complex, multichain enzyme responsible for most of the replicative synthesis in bacteria; Pol III exhibits 3'-5' exonuclease proofreading activity. The beta chain is required for initiation of replication as well as for processivity of DNA replication. The chain is Beta sliding clamp (dnaN) from Mycobacterium tuberculosis (strain CDC 1551 / Oshkosh).